Consider the following 373-residue polypeptide: 3-isopropylmalate dehydrogenase AMT6 (373 aa).

Residue 77–79 (VGG) participates in NADP(+) binding. Substrate-binding residues include Arg97 and Arg136. 3 residues coordinate Mg(2+): Asp227, Asp252, and Asp256. NADP(+) is bound at residue 284–289 (SRIRGL).

This sequence belongs to the isocitrate and isopropylmalate dehydrogenases family. Homodimer. The cofactor is Mg(2+). It depends on Mn(2+) as a cofactor.

The enzyme catalyses (2R,3S)-3-isopropylmalate + NAD(+) = 4-methyl-2-oxopentanoate + CO2 + NADH. Its pathway is amino-acid biosynthesis; L-leucine biosynthesis; L-leucine from 3-methyl-2-oxobutanoate: step 3/4. It participates in mycotoxin biosynthesis. In terms of biological role, 3-isopropylmalate dehydrogenase; part of the gene clusters that mediate the biosynthesis of AM-toxins, host-selective toxins (HSTs) causing Alternaria blotch on apple, a worldwide distributed disease. AM-toxins are cyclic depsipeptides containing the 3 residues 2-hydroxy-isovaleric acid (2-HIV), dehydroalanine, L-alanine which are common for all 3 AM-toxins I to III. The fourth precursor is L-alpha-amino-methoxyphenyl-valeric acid (L-Amv) for AM-toxin I, L-alpha-amino-phenyl-valeric acid (L-Apv) for AM-toxin II, and L-alpha-amino-hydroxyphenyl-valeric acid (L-Ahv) for AM-toxin III. AM-toxins have two target sites for affecting susceptible apple cells; they cause invagination of the plasma membrane and electrolyte loss and chloroplast disorganization. The non-ribosomal peptide synthetase AMT1 contains 4 catalytic modules and is responsible for activation of each residue in AM-toxin. The aldo-keto reductase AMT2 catalyzes the conversion of 2-keto-isovaleric acid (2-KIV) to 2-hydroxy-isovaleric acid (2-HIV), one of the precursor residues incorporated by AMT1 during AM-toxin biosynthesis, by reduction of its ketone to an alcohol. The cytochrome P450 monooxygenase AMT3 and the thioesterase AMT4 are also important for AM-toxin production, but their exact function within the AM-toxin biosynthesis are not known yet. Up to 21 proteins (including AMT1 to AMT4) are predicted to be involved in AM-toxin biosynthesis since their expression ishighly up-regulated in AM-toxin-producing cultures. The sequence is that of 3-isopropylmalate dehydrogenase AMT6 from Alternaria alternata (Alternaria rot fungus).